Reading from the N-terminus, the 404-residue chain is Cytochrome P450 monooxygenase avaI (404 aa).

Cysteine 382 lines the heme pocket.

It belongs to the cytochrome P450 family. Heme serves as cofactor.

Its pathway is secondary metabolite biosynthesis. Functionally, cytochrome P450 monooxygenase; part of the cluster that mediates the biosynthesis of a highly modified cyclo-arginine-tryptophan dipeptide (cRW). The first step of the pathway is perfornmed by the arginine-containing cyclodipeptide synthase (RCPDS) avaA that acts as the scaffold-generating enzyme and is responsible for formation of the cyclo-Arg-Trp (cRW) diketopiperazine. AvaB then acts as a multifunctional flavoenzyme that is responsible for generating the cyclo-Arg-formylkynurenine DKP, which can be deformylated by avaC. AvaB then further catalyzes an additional N-oxidation followed by cyclization and dehydration. The next step is an N-acetylation of the guanidine group catalyzed by the arginine N-acetyltransferase avaD. The roles of the additional enzymes identified within the ava cluster still have to be determined. The polypeptide is Cytochrome P450 monooxygenase avaI (Aspergillus versicolor).